The primary structure comprises 249 residues: NAD-dependent protein deacylase 2 (249 aa).

In terms of domain architecture, Deacetylase sirtuin-type spans M1 to R240. Residue G18 to W37 coordinates NAD(+). Residues Y62 and R65 each contribute to the substrate site. Q96–D99 lines the NAD(+) pocket. H114 functions as the Proton acceptor in the catalytic mechanism. Zn(2+) contacts are provided by C122, C125, C142, and C145. Residues G182 to S184, N208 to E210, and A226 each bind NAD(+).

Belongs to the sirtuin family. Class III subfamily. The cofactor is Zn(2+).

It is found in the cytoplasm. The enzyme catalyses N(6)-acetyl-L-lysyl-[protein] + NAD(+) + H2O = 2''-O-acetyl-ADP-D-ribose + nicotinamide + L-lysyl-[protein]. It catalyses the reaction N(6)-succinyl-L-lysyl-[protein] + NAD(+) + H2O = 2''-O-succinyl-ADP-D-ribose + nicotinamide + L-lysyl-[protein]. Functionally, NAD-dependent lysine deacetylase and desuccinylase that specifically removes acetyl and succinyl groups on target proteins. Modulates the activities of several proteins which are inactive in their acylated form. Deacetylates the N-terminal lysine residue of Alba, the major archaeal chromatin protein and that, in turn, increases Alba's DNA binding affinity, thereby repressing transcription. This Pyrobaculum aerophilum (strain ATCC 51768 / DSM 7523 / JCM 9630 / CIP 104966 / NBRC 100827 / IM2) protein is NAD-dependent protein deacylase 2.